Reading from the N-terminus, the 1372-residue chain is DNA-directed RNA polymerase subunit beta' (1372 aa).

Cysteine 69, cysteine 71, cysteine 84, and cysteine 87 together coordinate Zn(2+). The Mg(2+) site is built by aspartate 460, aspartate 462, and aspartate 464. Zn(2+) is bound by residues cysteine 808, cysteine 882, cysteine 889, and cysteine 892.

It belongs to the RNA polymerase beta' chain family. As to quaternary structure, the RNAP catalytic core consists of 2 alpha, 1 beta, 1 beta' and 1 omega subunit. When a sigma factor is associated with the core the holoenzyme is formed, which can initiate transcription. Mg(2+) is required as a cofactor. The cofactor is Zn(2+).

It carries out the reaction RNA(n) + a ribonucleoside 5'-triphosphate = RNA(n+1) + diphosphate. Functionally, DNA-dependent RNA polymerase catalyzes the transcription of DNA into RNA using the four ribonucleoside triphosphates as substrates. The chain is DNA-directed RNA polymerase subunit beta' from Rickettsia conorii (strain ATCC VR-613 / Malish 7).